The chain runs to 505 residues: Maturase K (505 aa).

The protein belongs to the intron maturase 2 family. MatK subfamily.

It is found in the plastid. Its subcellular location is the chloroplast. Its function is as follows. Usually encoded in the trnK tRNA gene intron. Probably assists in splicing its own and other chloroplast group II introns. The sequence is that of Maturase K from Blitum bonus-henricus (Good King Henry).